An 81-amino-acid polypeptide reads, in one-letter code: Photosystem I iron-sulfur center (81 aa).

4Fe-4S ferredoxin-type domains follow at residues 2 to 31 and 39 to 68; these read AHSVKIYDTCIGCTQCVRACPTDVLEMVPW and IASAPRTEDCVGCKRCESACPTDYLSVRVY. Positions 11, 14, 17, 21, 48, 51, 54, and 58 each coordinate [4Fe-4S] cluster.

As to quaternary structure, the eukaryotic PSI reaction center is composed of at least 11 subunits. It depends on [4Fe-4S] cluster as a cofactor.

It is found in the plastid. The protein localises to the chloroplast thylakoid membrane. It carries out the reaction reduced [plastocyanin] + hnu + oxidized [2Fe-2S]-[ferredoxin] = oxidized [plastocyanin] + reduced [2Fe-2S]-[ferredoxin]. Functionally, apoprotein for the two 4Fe-4S centers FA and FB of photosystem I (PSI); essential for photochemical activity. FB is the terminal electron acceptor of PSI, donating electrons to ferredoxin. The C-terminus interacts with PsaA/B/D and helps assemble the protein into the PSI complex. Required for binding of PsaD and PsaE to PSI. PSI is a plastocyanin-ferredoxin oxidoreductase, converting photonic excitation into a charge separation, which transfers an electron from the donor P700 chlorophyll pair to the spectroscopically characterized acceptors A0, A1, FX, FA and FB in turn. The chain is Photosystem I iron-sulfur center from Gnetum parvifolium (Small-leaved jointfir).